We begin with the raw amino-acid sequence, 286 residues long: Bifunctional protein FolD (286 aa).

NADP(+) is bound by residues 164–166 (GAS), Ile189, and Ile230.

The protein belongs to the tetrahydrofolate dehydrogenase/cyclohydrolase family. As to quaternary structure, homodimer.

The enzyme catalyses (6R)-5,10-methylene-5,6,7,8-tetrahydrofolate + NADP(+) = (6R)-5,10-methenyltetrahydrofolate + NADPH. The catalysed reaction is (6R)-5,10-methenyltetrahydrofolate + H2O = (6R)-10-formyltetrahydrofolate + H(+). It participates in one-carbon metabolism; tetrahydrofolate interconversion. In terms of biological role, catalyzes the oxidation of 5,10-methylenetetrahydrofolate to 5,10-methenyltetrahydrofolate and then the hydrolysis of 5,10-methenyltetrahydrofolate to 10-formyltetrahydrofolate. This Wolinella succinogenes (strain ATCC 29543 / DSM 1740 / CCUG 13145 / JCM 31913 / LMG 7466 / NCTC 11488 / FDC 602W) (Vibrio succinogenes) protein is Bifunctional protein FolD.